The following is a 236-amino-acid chain: 2-C-methyl-D-erythritol 4-phosphate cytidylyltransferase (236 aa).

This sequence belongs to the IspD/TarI cytidylyltransferase family. IspD subfamily.

It catalyses the reaction 2-C-methyl-D-erythritol 4-phosphate + CTP + H(+) = 4-CDP-2-C-methyl-D-erythritol + diphosphate. Its pathway is isoprenoid biosynthesis; isopentenyl diphosphate biosynthesis via DXP pathway; isopentenyl diphosphate from 1-deoxy-D-xylulose 5-phosphate: step 2/6. In terms of biological role, catalyzes the formation of 4-diphosphocytidyl-2-C-methyl-D-erythritol from CTP and 2-C-methyl-D-erythritol 4-phosphate (MEP). This is 2-C-methyl-D-erythritol 4-phosphate cytidylyltransferase from Alkaliphilus oremlandii (strain OhILAs) (Clostridium oremlandii (strain OhILAs)).